Consider the following 728-residue polypeptide: Dynamin-like protein 1 (728 aa).

Residues 1 to 119 (MKELFQKIWQ…ILQEKVQSID (119 aa)) form an assembly domain, required for tetramerization region. In terms of domain architecture, Dynamin-type G spans 159–442 (QNLEFNIAIT…LYAGEKSKIA (284 aa)). The G1 motif stretch occupies residues 169 to 176 (GVMNAGKS). 171-177 (MNAGKSS) contacts GDP. Residues 195-196 (ET) form a G2 motif region. A G3 motif region spans residues 298 to 301 (DTPG). Residues 358–361 (TKAD) are G4 motif. Residue Lys359 coordinates GDP. Glu388 is a region of interest (G5 motif). 400–402 (SAK) serves as a coordination point for GDP. The interval 470–695 (ENKQGVSEEN…LESLEKVLQS (226 aa)) is required for liposome binding but not for tetramerization.

It belongs to the TRAFAC class dynamin-like GTPase superfamily. Dynamin/Fzo/YdjA family. In terms of assembly, forms a 2:2 heterotetramer with DLP1. DLP2 forms a central back-to-back dimer flanked on each side by a DLP1 subunit. In the crystal structures the 2 DLP1 subunits are in very different conformations.

It localises to the cytoplasm. It is found in the cytosol. It catalyses the reaction GTP + H2O = GDP + phosphate + H(+). Functionally, the heterotetrameric DLP1(2)-DLP2(2) complex tethers liposomes and may mediate their fusion. Initial binding is probably mediated by DLP1, while DLP2 couples DLP1 subunits and increases the effective reach of the complex up to 45 nm. The role of the nucleotide is unknown. This subunit alone weakly binds to liposomes; GTP, GDP, GMPPCP and GMPPNP do not change heterotetramer binding. Tetramerization is required for GTPase activity, suggesting the GTPase domains (dynamin-type G) from DLP1 and DLP2 must dimerize to reconstitute the GTPase active site. In Campylobacter jejuni subsp. jejuni serotype O:23/36 (strain 81-176), this protein is Dynamin-like protein 1.